Reading from the N-terminus, the 742-residue chain is Potassium transporter 19 (742 aa).

Residues 1–46 are Cytoplasmic-facing; the sequence is MSVQEDGAARPEPDVLRRHDSLYGDAEKVSNNKRHGAGGSWARTLQ. A helical transmembrane segment spans residues 47-67; it reads LAFQSIGVVYGDVGTSPLYVY. Over 68-83 the chain is Extracellular; that stretch reads SSTFPNGIKHPDDLVG. A helical transmembrane segment spans residues 84–104; that stretch reads VLSLILYTLILIPMVKYVFIV. At 105 to 170 the chain is on the cytoplasmic side; that stretch reads LYANDNGDGG…QKLESSNAAK (66 aa). Residues 171–191 traverse the membrane as a helical segment; the sequence is IALFTITILGTSMVMGDGTLT. At 192–206 the chain is on the extracellular side; that stretch reads PAISVLSAVSGIREK. The helical transmembrane segment at 207–227 threads the bilayer; sequence APNLTQSQVVWISVAILFVLF. Topologically, residues 228–236 are cytoplasmic; that stretch reads SMQRFGTDK. The chain crosses the membrane as a helical span at residues 237–257; it reads VGYTFAPVISVWFLLIAGIGM. The Extracellular portion of the chain corresponds to 258-287; that stretch reads YNLTVHEITILRAFNPKYIVDYFRRNGKEA. Residue asparagine 259 is glycosylated (N-linked (GlcNAc...) asparagine). Residues 288 to 308 traverse the membrane as a helical segment; that stretch reads WVSLGGVVLCITGTEAMFADL. Topologically, residues 309 to 317 are cytoplasmic; that stretch reads GHFNIRAIQ. The chain crosses the membrane as a helical span at residues 318 to 338; the sequence is LSFTCVLFPSVALCYMGQAAY. Residues 339–352 are Extracellular-facing; it reads LRKFPENVGDTFYR. A helical transmembrane segment spans residues 353–373; sequence SIPAPLFWPVFVVAIMGAIIA. Residues 374-409 lie on the Cytoplasmic side of the membrane; the sequence is SQAMLSGAFAILSKALSLGCFPRVEVVHTSNKYEGQ. Residues 410-430 form a helical membrane-spanning segment; the sequence is VYIPEVNFLIGAASVAVTLAF. The Extracellular segment spans residues 431-441; it reads QTTANIGNAYG. The helical transmembrane segment at 442–462 threads the bilayer; that stretch reads ICVVTVFSITTHLMTVVMLLI. Over 463-468 the chain is Cytoplasmic; that stretch reads WKVRLP. Residues 469–489 form a helical membrane-spanning segment; it reads FIAAFYAAFGLAEFLYLSSIL. Topologically, residues 490–495 are extracellular; the sequence is SKFAEG. The helical transmembrane segment at 496–516 threads the bilayer; that stretch reads GYLPFCFSLVLMALMATWHYV. At 517 to 742 the chain is on the cytoplasmic side; sequence HVKRYWYELD…LLKVGITYEI (226 aa).

It belongs to the HAK/KUP transporter (TC 2.A.72.3) family.

The protein localises to the membrane. In terms of biological role, high-affinity potassium transporter. The sequence is that of Potassium transporter 19 (HAK19) from Oryza sativa subsp. japonica (Rice).